The following is a 934-amino-acid chain: Protein translocase subunit SecA (934 aa).

ATP-binding positions include Gln-87, 105–109 (GEGKT), and Asp-515. Zn(2+)-binding residues include Cys-918, Cys-920, Cys-929, and His-930.

This sequence belongs to the SecA family. Monomer and homodimer. Part of the essential Sec protein translocation apparatus which comprises SecA, SecYEG and auxiliary proteins SecDF-YajC and YidC. Zn(2+) serves as cofactor.

The protein resides in the cell inner membrane. It is found in the cytoplasm. It catalyses the reaction ATP + H2O + cellular proteinSide 1 = ADP + phosphate + cellular proteinSide 2.. Functionally, part of the Sec protein translocase complex. Interacts with the SecYEG preprotein conducting channel. Has a central role in coupling the hydrolysis of ATP to the transfer of proteins into and across the cell membrane, serving both as a receptor for the preprotein-SecB complex and as an ATP-driven molecular motor driving the stepwise translocation of polypeptide chains across the membrane. This Ralstonia nicotianae (strain ATCC BAA-1114 / GMI1000) (Ralstonia solanacearum) protein is Protein translocase subunit SecA.